Here is a 242-residue protein sequence, read N- to C-terminus: MNNIPSIEAVKDIRSGTCGPVAAPAVTSDLSENIILTSLDDLHNWARLSSLWPLLYGTACCFIEFAALIGSRFDFDRFGLVPRSSPRQADLLIVAGTVTMKMAPALVRLYEQMPDPKYVIAMGACTITGGMFSADSTTAVRGVDKLIPVDLYLPGCPPRPEAIFDAVIKLRKKVGNESFLERKKITQTHRYFTITHKMKRINPLVNGSYLNAKTQKAALKAGDDISLPTKSESIETTTKELN.

The [4Fe-4S] cluster site is built by C60, C61, C125, and C156.

Belongs to the complex I 20 kDa subunit family. In terms of assembly, NDH-1 can be composed of about 15 different subunits; different subcomplexes with different compositions have been identified which probably have different functions. [4Fe-4S] cluster serves as cofactor.

It is found in the cellular thylakoid membrane. The enzyme catalyses a plastoquinone + NADH + (n+1) H(+)(in) = a plastoquinol + NAD(+) + n H(+)(out). It catalyses the reaction a plastoquinone + NADPH + (n+1) H(+)(in) = a plastoquinol + NADP(+) + n H(+)(out). In terms of biological role, NDH-1 shuttles electrons from an unknown electron donor, via FMN and iron-sulfur (Fe-S) centers, to quinones in the respiratory and/or the photosynthetic chain. The immediate electron acceptor for the enzyme in this species is believed to be plastoquinone. Couples the redox reaction to proton translocation, and thus conserves the redox energy in a proton gradient. Cyanobacterial NDH-1 also plays a role in inorganic carbon-concentration. This is NAD(P)H-quinone oxidoreductase subunit K from Prochlorococcus marinus (strain SARG / CCMP1375 / SS120).